Consider the following 282-residue polypeptide: 4-hydroxybenzoate octaprenyltransferase (282 aa).

9 consecutive transmembrane segments (helical) span residues 17–37, 40–60, 90–110, 113–133, 135–155, 163–183, 207–227, 231–251, and 262–282; these read IGIL…NQGF, IDLL…GCVI, AFIL…KLPI, FYFA…KRFL, APQL…FIAS, FIVL…MYAM, LIIA…AINK, WFFY…LKLI, and AFLV…LALI.

Belongs to the UbiA prenyltransferase family. It depends on Mg(2+) as a cofactor.

It is found in the cell inner membrane. The catalysed reaction is all-trans-octaprenyl diphosphate + 4-hydroxybenzoate = 4-hydroxy-3-(all-trans-octaprenyl)benzoate + diphosphate. It participates in cofactor biosynthesis; ubiquinone biosynthesis. In terms of biological role, catalyzes the prenylation of para-hydroxybenzoate (PHB) with an all-trans polyprenyl group. Mediates the second step in the final reaction sequence of ubiquinone-8 (UQ-8) biosynthesis, which is the condensation of the polyisoprenoid side chain with PHB, generating the first membrane-bound Q intermediate 3-octaprenyl-4-hydroxybenzoate. This chain is 4-hydroxybenzoate octaprenyltransferase, found in Legionella pneumophila subsp. pneumophila (strain Philadelphia 1 / ATCC 33152 / DSM 7513).